A 253-amino-acid polypeptide reads, in one-letter code: Tyrosine recombinase XerD-like (253 aa).

A Core-binding (CB) domain is found at 8-81; that stretch reads KQLTTQITNF…AVNQFLLYLY (74 aa). One can recognise a Tyr recombinase domain in the interval 93 to 253; that stretch reads SETAPLPSQQ…PVTLEKYYKT (161 aa). Active-site residues include Lys-157 and Arg-218. Tyr-250 acts as the O-(3'-phospho-DNA)-tyrosine intermediate in catalysis.

The protein belongs to the 'phage' integrase family. XerD-like subfamily.

Its subcellular location is the cytoplasm. Functionally, putative tyrosine recombinase. Not involved in the cutting and rejoining of the recombining DNA molecules on dif(SL) site. The protein is Tyrosine recombinase XerD-like of Streptococcus thermophilus (strain CNRZ 1066).